We begin with the raw amino-acid sequence, 218 residues long: Thiopurine S-methyltransferase (218 aa).

S-adenosyl-L-methionine-binding residues include Trp-10, Leu-45, Glu-66, and Arg-123.

It belongs to the class I-like SAM-binding methyltransferase superfamily. TPMT family.

The protein resides in the cytoplasm. It carries out the reaction S-adenosyl-L-methionine + a thiopurine = S-adenosyl-L-homocysteine + a thiopurine S-methylether.. In Shewanella loihica (strain ATCC BAA-1088 / PV-4), this protein is Thiopurine S-methyltransferase.